An 817-amino-acid chain; its full sequence is Lon protease 1 (817 aa).

Residues 18-216 (VPLLPLRDII…KLYELMQGEI (199 aa)) form the Lon N-terminal domain. 368–375 (GPPGVGKT) contributes to the ATP binding site. Residues 604 to 785 (EDQVGIVTGL…DDVLREALVL (182 aa)) form the Lon proteolytic domain. Residues S691 and K734 contribute to the active site. A disordered region spans residues 789–817 (EEFGRKPTTDGGKLGGTTELPASPAVAPA).

It belongs to the peptidase S16 family. As to quaternary structure, homohexamer. Organized in a ring with a central cavity.

The protein resides in the cytoplasm. The enzyme catalyses Hydrolysis of proteins in presence of ATP.. Functionally, ATP-dependent serine protease that mediates the selective degradation of mutant and abnormal proteins as well as certain short-lived regulatory proteins. Required for cellular homeostasis and for survival from DNA damage and developmental changes induced by stress. Degrades polypeptides processively to yield small peptide fragments that are 5 to 10 amino acids long. Binds to DNA in a double-stranded, site-specific manner. The polypeptide is Lon protease 1 (Myxococcus xanthus).